A 267-amino-acid polypeptide reads, in one-letter code: Phosphatidylserine decarboxylase proenzyme (267 aa).

Catalysis depends on charge relay system; for autoendoproteolytic cleavage activity residues Asp78, His132, and Ser236. Ser236 (schiff-base intermediate with substrate; via pyruvic acid; for decarboxylase activity) is an active-site residue. Position 236 is a pyruvic acid (Ser); by autocatalysis (Ser236).

It belongs to the phosphatidylserine decarboxylase family. PSD-B subfamily. Prokaryotic type I sub-subfamily. As to quaternary structure, heterodimer of a large membrane-associated beta subunit and a small pyruvoyl-containing alpha subunit. It depends on pyruvate as a cofactor. Post-translationally, is synthesized initially as an inactive proenzyme. Formation of the active enzyme involves a self-maturation process in which the active site pyruvoyl group is generated from an internal serine residue via an autocatalytic post-translational modification. Two non-identical subunits are generated from the proenzyme in this reaction, and the pyruvate is formed at the N-terminus of the alpha chain, which is derived from the carboxyl end of the proenzyme. The autoendoproteolytic cleavage occurs by a canonical serine protease mechanism, in which the side chain hydroxyl group of the serine supplies its oxygen atom to form the C-terminus of the beta chain, while the remainder of the serine residue undergoes an oxidative deamination to produce ammonia and the pyruvoyl prosthetic group on the alpha chain. During this reaction, the Ser that is part of the protease active site of the proenzyme becomes the pyruvoyl prosthetic group, which constitutes an essential element of the active site of the mature decarboxylase.

Its subcellular location is the cell membrane. It carries out the reaction a 1,2-diacyl-sn-glycero-3-phospho-L-serine + H(+) = a 1,2-diacyl-sn-glycero-3-phosphoethanolamine + CO2. It functions in the pathway phospholipid metabolism; phosphatidylethanolamine biosynthesis; phosphatidylethanolamine from CDP-diacylglycerol: step 2/2. Functionally, catalyzes the formation of phosphatidylethanolamine (PtdEtn) from phosphatidylserine (PtdSer). In Helicobacter pylori (strain J99 / ATCC 700824) (Campylobacter pylori J99), this protein is Phosphatidylserine decarboxylase proenzyme.